Here is a 361-residue protein sequence, read N- to C-terminus: Beta-hexosaminidase (361 aa).

Substrate is bound by residues Asp-69, Arg-77, Arg-144, and 174–175 (KH). The active-site Proton donor/acceptor is the His-187. The active-site Nucleophile is the Asp-258.

It belongs to the glycosyl hydrolase 3 family. NagZ subfamily.

Its subcellular location is the cytoplasm. It carries out the reaction Hydrolysis of terminal non-reducing N-acetyl-D-hexosamine residues in N-acetyl-beta-D-hexosaminides.. It functions in the pathway cell wall biogenesis; peptidoglycan recycling. Functionally, plays a role in peptidoglycan recycling by cleaving the terminal beta-1,4-linked N-acetylglucosamine (GlcNAc) from peptide-linked peptidoglycan fragments, giving rise to free GlcNAc, anhydro-N-acetylmuramic acid and anhydro-N-acetylmuramic acid-linked peptides. The sequence is that of Beta-hexosaminidase from Neisseria gonorrhoeae (strain NCCP11945).